The sequence spans 147 residues: D-aminoacyl-tRNA deacylase (147 aa).

Positions 136-137 match the Gly-cisPro motif, important for rejection of L-amino acids motif; it reads GP.

The protein belongs to the DTD family. As to quaternary structure, homodimer.

It is found in the cytoplasm. The catalysed reaction is glycyl-tRNA(Ala) + H2O = tRNA(Ala) + glycine + H(+). The enzyme catalyses a D-aminoacyl-tRNA + H2O = a tRNA + a D-alpha-amino acid + H(+). An aminoacyl-tRNA editing enzyme that deacylates mischarged D-aminoacyl-tRNAs. Also deacylates mischarged glycyl-tRNA(Ala), protecting cells against glycine mischarging by AlaRS. Acts via tRNA-based rather than protein-based catalysis; rejects L-amino acids rather than detecting D-amino acids in the active site. By recycling D-aminoacyl-tRNA to D-amino acids and free tRNA molecules, this enzyme counteracts the toxicity associated with the formation of D-aminoacyl-tRNA entities in vivo and helps enforce protein L-homochirality. This is D-aminoacyl-tRNA deacylase from Streptococcus dysgalactiae subsp. equisimilis (Streptococcus equisimilis).